The following is a 344-amino-acid chain: Centromere protein L (344 aa).

The disordered stretch occupies residues 1–32; that stretch reads MAGGRPAGSAIEMEGAMRTLPSSGRPSGTGWQ. Residues 20–32 show a composition bias toward polar residues; sequence LPSSGRPSGTGWQ.

It belongs to the CENP-L/IML3 family. As to quaternary structure, component of the CENPA-HI complex, at least composed of CENPH, CENPI, CENPK, CENPL, CENPM, CENPO and CENPP.

The protein resides in the nucleus. It localises to the chromosome. Its subcellular location is the centromere. Functionally, component of the CENPA-HI complex, a centromeric complex involved in assembly of kinetochore proteins, mitotic progression and chromosome segregation. The chain is Centromere protein L (CENPL) from Gallus gallus (Chicken).